We begin with the raw amino-acid sequence, 146 residues long: Ankyrin repeat-containing protein P16F5.05c (146 aa).

ANK repeat units follow at residues 1-31, 35-64, 70-99, and 103-132; these read MDVD…ELSR, NGNS…KEVI, SGNT…DPHI, and YEKS…AKGS.

Its subcellular location is the cytoplasm. It is found in the nucleus. This Schizosaccharomyces pombe (strain 972 / ATCC 24843) (Fission yeast) protein is Ankyrin repeat-containing protein P16F5.05c.